A 765-amino-acid polypeptide reads, in one-letter code: Multifunctional tryptophan biosynthesis protein (765 aa).

A Glutamine amidotransferase type-1 domain is found at 2–196 (ATLLIDNYDS…LSLRGGNWDE (195 aa)). L-glutamine is bound at residue 53-55 (GPG). Catalysis depends on C81, which acts as the Nucleophile; for GATase activity. L-glutamine is bound by residues Q85 and 131–132 (SL). Active-site for GATase activity residues include H170 and E172. An indole-3-glycerol phosphate synthase region spans residues 231-494 (TILSRIYAQR…NLKEFVAELL (264 aa)). The tract at residues 512 to 765 (QVKICGISSV…VEKAKSINLQ (254 aa)) is N-(5'-phosphoribosyl)anthranilate isomerase.

It carries out the reaction N-(5-phospho-beta-D-ribosyl)anthranilate = 1-(2-carboxyphenylamino)-1-deoxy-D-ribulose 5-phosphate. The catalysed reaction is 1-(2-carboxyphenylamino)-1-deoxy-D-ribulose 5-phosphate + H(+) = (1S,2R)-1-C-(indol-3-yl)glycerol 3-phosphate + CO2 + H2O. The enzyme catalyses chorismate + L-glutamine = anthranilate + pyruvate + L-glutamate + H(+). The protein operates within amino-acid biosynthesis; L-tryptophan biosynthesis; L-tryptophan from chorismate: step 1/5. It participates in amino-acid biosynthesis; L-tryptophan biosynthesis; L-tryptophan from chorismate: step 3/5. It functions in the pathway amino-acid biosynthesis; L-tryptophan biosynthesis; L-tryptophan from chorismate: step 4/5. Its function is as follows. Trifunctional enzyme bearing the Gln amidotransferase (GATase) domain of anthranilate synthase, indole-glycerolphosphate synthase, and phosphoribosylanthranilate isomerase activities. The protein is Multifunctional tryptophan biosynthesis protein (trp1) of Phycomyces blakesleeanus.